Here is a 1860-residue protein sequence, read N- to C-terminus: Golgi-specific brefeldin A-resistance guanine nucleotide exchange factor 1 (1860 aa).

Positions 1–211 (MVDKNIYIIQ…EPKNYVGTNM (211 aa)) are DCB; DCB:DCB domain and DCB:HUS domain interaction. The tract at residues 1–381 (MVDKNIYIIQ…SVHDMDYVNP (381 aa)) is interaction with RAB1B. Disordered stretches follow at residues 215-266 (KMRA…GGMP) and 281-372 (AASA…DSAS). Residues 227–241 (WKKQKRSPRPPRHMT) show a composition bias toward basic residues. Composition is skewed to polar residues over residues 250–262 (PTPN…SNLT), 290–301 (TDSGLEFSSQTT), and 335–351 (DLQQ…SASV). 2 positions are modified to phosphoserine: serine 350 and serine 353. A Phosphothreonine modification is found at threonine 508. The segment at 531–551 (RIPSFVTELYINYDCDYYCSN) is HUS; DCB:HUS domain interaction. The segment covering 620–631 (TREASNTERTAS) has biased composition (basic and acidic residues). Positions 620 to 666 (TREASNTERTASDGKAVGMASDIPGLHLPGGGRLPPEHGKSGCSDLE) are disordered. A Phosphoserine modification is found at serine 663. The SEC7 domain maps to 693 to 883 (ELIEIKNKKK…EDMYHAIKNE (191 aa)). Residues 887-1371 (MPEEQTGLVR…PSRPGPSPLI (485 aa)) form a phosphatidylinositol-phosphate binding; required for translocation to the leading edge and for ARF1 activation upon GPCR signaling region. Over residues 1285 to 1297 (QATARADAPDAGA) the composition is skewed to low complexity. A disordered region spans residues 1285–1336 (QATARADAPDAGAQSDSELPSYHQNDVSLDRGYTSDSEVYTDHGRPGKIHRS). Over residues 1298-1311 (QSDSELPSYHQNDV) the composition is skewed to polar residues. Phosphoserine is present on serine 1299. Tyrosine 1317 is modified (phosphotyrosine). Serine 1319, serine 1321, and serine 1336 each carry phosphoserine. Threonine 1338 bears the Phosphothreonine; by AMPK mark. Disordered stretches follow at residues 1351-1371 (GKDD…SPLI), 1431-1484 (CKSQ…DEGV), and 1726-1809 (PMPM…QPPL). Residues 1433–1447 (SQEKRGKSHKYDSKG) are compositionally biased toward basic and acidic residues. The segment covering 1465–1474 (TSSQHASRGG) has biased composition (polar residues). Serine 1476, serine 1774, and serine 1785 each carry phosphoserine. Residues 1775–1792 (PRAASSSSPGSPVASSPS) are compositionally biased toward low complexity.

Can form homodimers and probably homotetramers. Interacts with COPG1; the interaction is independent of ARF1 activation. Interacts with ARF1, ARF3, ARF4 and ARF5. Interacts with RAB1B (GTP-bound form); required for GBF1 membrane association. Interacts with GGA1, GGA2 and GGA3. Interacts with USO1. Interacts (via SEC7 domain) with PNPLA2 (via C-terminus); the interaction is direct. Interacts with ARMH3. In terms of assembly, (Microbial infection) Interacts with poliovirus protein 3A. AMPK-mediated phosphorylation at Thr-1338 is induced by 2-deoxyglucose (2-DG) and AICA ribonucleotide, and occurs during mitosis leading to membrane disassociation and inactivation of ARF1 during mitosis. In terms of tissue distribution, ubiquitous.

The protein resides in the golgi apparatus. It is found in the cis-Golgi network. Its subcellular location is the endoplasmic reticulum-Golgi intermediate compartment. It localises to the trans-Golgi network. The protein localises to the cytoplasm. The protein resides in the lipid droplet. It is found in the membrane. With respect to regulation, inhibited by brefeldin A (BFA). Inhibited by golgicide A (GCA). Guanine-nucleotide exchange factor (GEF) for members of the Arf family of small GTPases involved in trafficking in the early secretory pathway; its GEF activity initiates the coating of nascent vesicles via the localized generation of activated ARFs through replacement of GDP with GTP. Recruitment to cis-Golgi membranes requires membrane association of Arf-GDP and can be regulated by ARF1, ARF3, ARF4 and ARF5. Involved in the recruitment of the COPI coat complex to the endoplasmic reticulum exit sites (ERES), and the endoplasmic reticulum-Golgi intermediate (ERGIC) and cis-Golgi compartments which implicates ARF1 activation. Involved in COPI vesicle-dependent retrograde transport from the ERGIC and cis-Golgi compartments to the endoplasmic reticulum (ER). Involved in the trans-Golgi network recruitment of GGA1, GGA2, GGA3, BIG1, BIG2, and the AP-1 adaptor protein complex related to chlathrin-dependent transport; the function requires its GEF activity (probably at least in part on ARF4 and ARF5). Has GEF activity towards ARF1. Has in vitro GEF activity towards ARF5. Involved in the processing of PSAP. Required for the assembly of the Golgi apparatus. The AMPK-phosphorylated form is involved in Golgi disassembly during mitotis and under stress conditions. May be involved in the COPI vesicle-dependent recruitment of PNPLA2 to lipid droplets; however, this function is under debate. In neutrophils, involved in G protein-coupled receptor (GPCR)-mediated chemotaxis und superoxide production. Proposed to be recruited by phosphatidylinositol-phosphates generated upon GPCR stimulation to the leading edge where it recruits and activates ARF1, and is involved in recruitment of GIT2 and the NADPH oxidase complex. Plays a role in maintaining mitochondrial morphology. The protein is Golgi-specific brefeldin A-resistance guanine nucleotide exchange factor 1 (GBF1) of Homo sapiens (Human).